We begin with the raw amino-acid sequence, 125 residues long: Fluoride-specific ion channel FluC (125 aa).

Transmembrane regions (helical) follow at residues 36–56 (GTIFVNVVGSFLLSFLMFLSI), 65–85 (FILFFGTGFLGAFTTFSTFAY), and 99–119 (IIYFIANIFLGFFAAILGMFL). 2 residues coordinate Na(+): Gly75 and Thr78.

This sequence belongs to the fluoride channel Fluc/FEX (TC 1.A.43) family.

It is found in the cell inner membrane. The catalysed reaction is fluoride(in) = fluoride(out). With respect to regulation, na(+) is not transported, but it plays an essential structural role and its presence is essential for fluoride channel function. In terms of biological role, fluoride-specific ion channel. Important for reducing fluoride concentration in the cell, thus reducing its toxicity. This chain is Fluoride-specific ion channel FluC, found in Thermosipho africanus (strain TCF52B).